The sequence spans 930 residues: Nonribosomal peptide synthetase btyA (930 aa).

Residues 31–440 (ESPHRLTYAE…RGRSKELICI (410 aa)) form an adenylation (A) domain region. Positions 570–647 (PAGNETETLL…VLARQLQDGH (78 aa)) constitute a Carrier domain. Ser607 is modified (O-(pantetheine 4'-phosphoryl)serine). Positions 667–920 (PLWLIHPIGG…EDNVHKVYRV (254 aa)) are thioesterase (TE) domain.

It belongs to the NRP synthetase family.

It catalyses the reaction 2 3-(4-hydroxyphenyl)pyruvate + H(+) = (2S)-2-(4-hydoxybenzyl)-3-(4-hydroxyphenyl)-2-furonol carboxylate + H2O. The protein operates within secondary metabolite biosynthesis. In terms of biological role, nonribosomal peptide synthetase; part of the gene cluster that mediates the biosynthesis of butyrolactones, natural products that show a wide range of biological activities such as antitumor, antiparasitic or anti-inflammatory activity. The nonribosomal peptide synthetase btyA is responsible for the production of butyrolactone II, the core structure of butyrolactones. BtyA first activates 4-hydroxyphenylpyruvate (HPPA) through its A domain to AMP-HPPA. The HPPA unit is then loaded to the T domain and eventually transferred to the TE domain. Upon loading of another HPPA unit to the T domain, the TE domain promotes the enolate formation on the unit attached. Then aldol condensation establishes the carbon-carbon bond between the two units, followed by ester cyclization, and keto-enol tautomerization to yield the gamma-butyrolactone core. Hydrolysis, and finally esterification of the exposed carboxylic acid group yields butyrolactone II. Two additional enzymes, a prenyltransferase and an epoxidase, may be involved in the tailoring modifications of butyrolactone II to give butyrolactone III and butyrolactone I. The sequence is that of Nonribosomal peptide synthetase btyA from Aspergillus terreus (strain NIH 2624 / FGSC A1156).